The sequence spans 417 residues: Membrane protein UL43 (417 aa).

The interval 1-21 (MLRNDSHRAVSPEDGQGRVDD) is disordered. Helical transmembrane passes span 57–77 (GPYANAASGAFAVGCAVLGFM), 90–110 (IYAWLKLAAGGAALVLWSLGE), 119–139 (APGPATQCLALGAAYAALLVL), 146–166 (LFLLAPGPLFVGTLGMVVGGL), and 175–195 (WWIGGPAAAALAAAVLAGPGA). The interval 217–254 (AGESLSRRPPEDPERPGVPGPPSPPTPQRSHGPPADEV) is disordered. Basic and acidic residues predominate over residues 221–231 (LSRRPPEDPER). The segment covering 232–243 (PGVPGPPSPPTP) has biased composition (pro residues). Transmembrane regions (helical) follow at residues 263 to 283 (ENVWVPVVTFLGAGALAVKTV), 291 to 311 (PGPGLPLWPQVFLGGHVAVAL), 323 to 343 (LTDPLLFVHAGLQVINLGLVF), 348 to 368 (VVVYAALGGAVWISLAQVLGL), and 389 to 409 (GLFFSVYALGFGVGVLLCPPG).

The protein belongs to the alphaherpesvirinae HHV-1 UL43 family.

Its subcellular location is the membrane. The polypeptide is Membrane protein UL43 (Human herpesvirus 1 (strain 17) (HHV-1)).